A 561-amino-acid chain; its full sequence is Dihydroxy-acid dehydratase (561 aa).

Residue Cys50 participates in [2Fe-2S] cluster binding. Residue Asp82 coordinates Mg(2+). Cys123 contacts [2Fe-2S] cluster. Positions 124 and 125 each coordinate Mg(2+). Lys125 carries the post-translational modification N6-carboxylysine. Cys195 provides a ligand contact to [2Fe-2S] cluster. Glu447 contributes to the Mg(2+) binding site. Ser473 serves as the catalytic Proton acceptor.

This sequence belongs to the IlvD/Edd family. As to quaternary structure, homodimer. Requires [2Fe-2S] cluster as cofactor. It depends on Mg(2+) as a cofactor.

The catalysed reaction is (2R)-2,3-dihydroxy-3-methylbutanoate = 3-methyl-2-oxobutanoate + H2O. It carries out the reaction (2R,3R)-2,3-dihydroxy-3-methylpentanoate = (S)-3-methyl-2-oxopentanoate + H2O. Its pathway is amino-acid biosynthesis; L-isoleucine biosynthesis; L-isoleucine from 2-oxobutanoate: step 3/4. The protein operates within amino-acid biosynthesis; L-valine biosynthesis; L-valine from pyruvate: step 3/4. Its function is as follows. Functions in the biosynthesis of branched-chain amino acids. Catalyzes the dehydration of (2R,3R)-2,3-dihydroxy-3-methylpentanoate (2,3-dihydroxy-3-methylvalerate) into 2-oxo-3-methylpentanoate (2-oxo-3-methylvalerate) and of (2R)-2,3-dihydroxy-3-methylbutanoate (2,3-dihydroxyisovalerate) into 2-oxo-3-methylbutanoate (2-oxoisovalerate), the penultimate precursor to L-isoleucine and L-valine, respectively. The polypeptide is Dihydroxy-acid dehydratase (Acaryochloris marina (strain MBIC 11017)).